Reading from the N-terminus, the 272-residue chain is Cell shape-determining protein MreC (272 aa).

At 1–8 the chain is on the cytoplasmic side; it reads MNRFKKSK. A helical transmembrane segment spans residues 9–29; that stretch reads YVIIVFVTVLLVSALLATTYS. Residues 30–272 lie on the Extracellular side of the membrane; sequence STIVTKLGDG…VDVIELVGNS (243 aa). The stretch at 64–112 forms a coiled coil; the sequence is LTRTYNENESLKKQLYQLEVKSNEVESLKTENEQLRQLLDMKSKLQATK.

It belongs to the MreC family. As to quaternary structure, homodimer. Interacts with a number of proteins in the elongasome, including PBP1a (pbpA), PBP1b, PBP2a, PBP2b (penA), StkP, MltG, MreD and RodZ.

The protein resides in the cell membrane. Its function is as follows. Involved in formation and maintenance of cell shape, probably part of the elongasome which synthesizes peripheral peptidoglycan (PG). In Streptococcus pneumoniae (strain ATCC BAA-255 / R6), this protein is Cell shape-determining protein MreC.